Here is a 645-residue protein sequence, read N- to C-terminus: 1-deoxy-D-xylulose-5-phosphate synthase (645 aa).

Thiamine diphosphate contacts are provided by residues histidine 87 and 128–130 (GHS). Residue aspartate 159 participates in Mg(2+) binding. Residues 160–161 (GA), asparagine 188, phenylalanine 295, and glutamate 384 each bind thiamine diphosphate. Asparagine 188 is a Mg(2+) binding site.

This sequence belongs to the transketolase family. DXPS subfamily. Homodimer. Requires Mg(2+) as cofactor. Thiamine diphosphate is required as a cofactor.

The enzyme catalyses D-glyceraldehyde 3-phosphate + pyruvate + H(+) = 1-deoxy-D-xylulose 5-phosphate + CO2. It functions in the pathway metabolic intermediate biosynthesis; 1-deoxy-D-xylulose 5-phosphate biosynthesis; 1-deoxy-D-xylulose 5-phosphate from D-glyceraldehyde 3-phosphate and pyruvate: step 1/1. Functionally, catalyzes the acyloin condensation reaction between C atoms 2 and 3 of pyruvate and glyceraldehyde 3-phosphate to yield 1-deoxy-D-xylulose-5-phosphate (DXP). The chain is 1-deoxy-D-xylulose-5-phosphate synthase from Alcanivorax borkumensis (strain ATCC 700651 / DSM 11573 / NCIMB 13689 / SK2).